A 218-amino-acid polypeptide reads, in one-letter code: Probable transaldolase (218 aa).

Lys87 serves as the catalytic Schiff-base intermediate with substrate.

It belongs to the transaldolase family. Type 3B subfamily.

The protein localises to the cytoplasm. It carries out the reaction D-sedoheptulose 7-phosphate + D-glyceraldehyde 3-phosphate = D-erythrose 4-phosphate + beta-D-fructose 6-phosphate. It functions in the pathway carbohydrate degradation; pentose phosphate pathway; D-glyceraldehyde 3-phosphate and beta-D-fructose 6-phosphate from D-ribose 5-phosphate and D-xylulose 5-phosphate (non-oxidative stage): step 2/3. Its function is as follows. Transaldolase is important for the balance of metabolites in the pentose-phosphate pathway. The polypeptide is Probable transaldolase (Cytophaga hutchinsonii (strain ATCC 33406 / DSM 1761 / CIP 103989 / NBRC 15051 / NCIMB 9469 / D465)).